The sequence spans 166 residues: Ribonuclease H (166 aa).

Residues 5-147 enclose the RNase H type-1 domain; sequence PRKRVALFTD…VDREARRQAQ (143 aa). The Mg(2+) site is built by aspartate 14, glutamate 52, aspartate 74, and aspartate 139. The tract at residues 128–166 is disordered; the sequence is GHTGHPENERVDREARRQAQSQAKTPCPPRAPTLFHEEA. The segment covering 131 to 144 has biased composition (basic and acidic residues); it reads GHPENERVDREARR.

The protein belongs to the RNase H family. In terms of assembly, monomer. The cofactor is Mg(2+).

The enzyme catalyses Endonucleolytic cleavage to 5'-phosphomonoester.. Endonuclease that specifically degrades the RNA of RNA-DNA hybrids. This chain is Ribonuclease H (rnhA), found in Thermus thermophilus (strain ATCC 27634 / DSM 579 / HB8).